The chain runs to 350 residues: Methylthioribose-1-phosphate isomerase (350 aa).

Residues 48 to 50 (RGA), arginine 93, and glutamine 198 each bind substrate. Aspartate 239 functions as the Proton donor in the catalytic mechanism. Position 249-250 (249-250 (NK)) interacts with substrate.

This sequence belongs to the eIF-2B alpha/beta/delta subunits family. MtnA subfamily.

It catalyses the reaction 5-(methylsulfanyl)-alpha-D-ribose 1-phosphate = 5-(methylsulfanyl)-D-ribulose 1-phosphate. It functions in the pathway amino-acid biosynthesis; L-methionine biosynthesis via salvage pathway; L-methionine from S-methyl-5-thio-alpha-D-ribose 1-phosphate: step 1/6. In terms of biological role, catalyzes the interconversion of methylthioribose-1-phosphate (MTR-1-P) into methylthioribulose-1-phosphate (MTRu-1-P). This chain is Methylthioribose-1-phosphate isomerase, found in Fervidobacterium nodosum (strain ATCC 35602 / DSM 5306 / Rt17-B1).